A 141-amino-acid chain; its full sequence is Large ribosomal subunit protein uL11 (141 aa).

It belongs to the universal ribosomal protein uL11 family. Part of the ribosomal stalk of the 50S ribosomal subunit. Interacts with L10 and the large rRNA to form the base of the stalk. L10 forms an elongated spine to which L12 dimers bind in a sequential fashion forming a multimeric L10(L12)X complex. One or more lysine residues are methylated.

Forms part of the ribosomal stalk which helps the ribosome interact with GTP-bound translation factors. The protein is Large ribosomal subunit protein uL11 of Aster yellows witches'-broom phytoplasma (strain AYWB).